A 462-amino-acid chain; its full sequence is NAD-capped RNA hydrolase NUDT12 (462 aa).

ANK repeat units follow at residues 11–40 (EIVTQFHCSAAEGDIAKLTGILSHSPSLLN), 45–74 (NGWTALMYAARNGHPEIVQFLLEKGCDRSI), and 78–98 (SRQTALDIAVFWGYKHIANLL). Lys185 bears the N6-succinyllysine mark. Positions 284 and 287 each coordinate Zn(2+). The residue at position 292 (Lys292) is an N6-succinyllysine. The Zn(2+) site is built by Cys302 and Cys307. Substrate is bound by residues Tyr318, 354 to 356 (AGF), Glu370, Glu374, and Glu415. One can recognise a Nudix hydrolase domain in the interval 319–453 (PRVDPVVIMQ…SRAIAHQLIK (135 aa)). Mg(2+) contacts are provided by Ala354, Glu370, Glu374, and Glu415. Residues 355 to 376 (GFIEPGETIEDAVRREVEEESG) carry the Nudix box motif. The Microbody targeting signal signature appears at 460–462 (PNL).

It belongs to the Nudix hydrolase family. NudC subfamily. In terms of assembly, homodimer. Homodimerization is essential for its catalytic activity and protein stability. Interacts (via ANK repeats) with BLMH. It depends on Mg(2+) as a cofactor. Zn(2+) serves as cofactor.

The protein resides in the cytoplasm. It is found in the peroxisome. It localises to the cytoplasmic granule. It carries out the reaction a 5'-end NAD(+)-phospho-ribonucleoside in mRNA + H2O = a 5'-end phospho-adenosine-phospho-ribonucleoside in mRNA + beta-nicotinamide D-ribonucleotide + 2 H(+). It catalyses the reaction NAD(+) + H2O = beta-nicotinamide D-ribonucleotide + AMP + 2 H(+). The catalysed reaction is NADH + H2O = reduced beta-nicotinamide D-ribonucleotide + AMP + 2 H(+). The enzyme catalyses NADPH + H2O = reduced beta-nicotinamide D-ribonucleotide + adenosine 2',5'-bisphosphate + 2 H(+). In terms of biological role, mRNA decapping enzyme that specifically removes the nicotinamide adenine dinucleotide (NAD) cap from a subset of mRNAs by hydrolyzing the diphosphate linkage to produce nicotinamide mononucleotide (NMN) and 5' monophosphate mRNA. The NAD-cap is present at the 5'-end of some RNAs; in contrast to the canonical N7 methylguanosine (m7G) cap, the NAD cap promotes mRNA decay. Preferentially acts on NAD-capped transcripts in response to nutrient stress. Also acts on free nicotinamide adenine dinucleotide molecules: hydrolyzes NAD(H) into NMN(H) and AMP, and NADPH into NMNH and 2',5'-ADP. May act to regulate the concentration of peroxisomal nicotinamide nucleotide cofactors required for oxidative metabolism in this organelle. Regulates the levels of circadian clock components PER1, PER2, PER3 and CRY2 in the liver. The sequence is that of NAD-capped RNA hydrolase NUDT12 from Macaca fascicularis (Crab-eating macaque).